The sequence spans 492 residues: Acyl-CoA-binding domain-containing protein 5 (492 aa).

Residues 8–97 (HATRFEAAVK…MKKILESMPM (90 aa)) enclose the ACB domain. An acyl-CoA is bound by residues 19 to 28 (IQSLPKNGSF), 39 to 43 (YSFYK), Lys-65, and Tyr-84. Disordered regions lie at residues 141-162 (AVNG…GLRE) and 335-399 (VKCG…DRGP). A compositionally biased stretch (acidic residues) spans 153 to 162 (AESEEEGLRE). Basic and acidic residues predominate over residues 335 to 360 (VKCGGEDGKASNGAPHKEKKDGEKAD). The segment covering 378–388 (GSQGGQMGNGG) has biased composition (gly residues). Residues 389 to 399 (DGERWGSDRGP) show a composition bias toward basic and acidic residues. Residues 405–431 (EQIAVVLMRLQEDMQNVLQRLHMLEAV) adopt a coiled-coil conformation. Residues 464–484 (GVLAFAIVWPFIAQWLVHVYL) form a helical membrane-spanning segment.

It belongs to the ATG37 family.

Its subcellular location is the peroxisome membrane. Its function is as follows. Acyl-CoA binding protein which acts as the peroxisome receptor for pexophagy but is dispensable for aggrephagy and nonselective autophagy. Binds medium- and long-chain acyl-CoA esters. The chain is Acyl-CoA-binding domain-containing protein 5 (ACBD5) from Gallus gallus (Chicken).